The chain runs to 366 residues: MASSKKQKKKMHRPHNRKLMIRDLPVGAAYLLHPSLRGILLSRPKRWNSGSPSHRIAVNLVRKYKKQLKPRVLPFFCDHCRLASRTLLHIKEHVCDKEEKRKAARKEESRKFADYDVTNEIKLATNSEKQWRFNAMAVLEQTLRPNKVAPKKVEIEEDPGIDQLLDSEPDQEFYDAQEQEFEDDTPHYPIKDVLVPSSQPPRPKVTLKSSECLGHNDAGVFCFNCKGSFDSYNQFQLHLNEDYNDGKCNRALPEYYYVQRHDRTHMFDKRYKHSVQHHKPIKRDISHIQCTLCKAVNFASTGDLYAHMVKCASSTTNEDKESAIDCPTAFGYGMPPSFNACQYVFPDPAKERYSRNSRGSKEPVES.

This is an uncharacterized protein from Caenorhabditis elegans.